Consider the following 228-residue polypeptide: 2-C-methyl-D-erythritol 4-phosphate cytidylyltransferase (228 aa).

It belongs to the IspD/TarI cytidylyltransferase family. IspD subfamily.

It carries out the reaction 2-C-methyl-D-erythritol 4-phosphate + CTP + H(+) = 4-CDP-2-C-methyl-D-erythritol + diphosphate. The protein operates within isoprenoid biosynthesis; isopentenyl diphosphate biosynthesis via DXP pathway; isopentenyl diphosphate from 1-deoxy-D-xylulose 5-phosphate: step 2/6. Its function is as follows. Catalyzes the formation of 4-diphosphocytidyl-2-C-methyl-D-erythritol from CTP and 2-C-methyl-D-erythritol 4-phosphate (MEP). This is 2-C-methyl-D-erythritol 4-phosphate cytidylyltransferase from Actinobacillus pleuropneumoniae serotype 5b (strain L20).